Consider the following 121-residue polypeptide: Chorion protein S15 (121 aa).

An N-terminal signal peptide occupies residues 1-18; it reads MKYLFVCVSLALFAYISA.

The protein belongs to the chorion protein S15/S18 family.

The protein localises to the secreted. Functionally, chorion membrane (egg shell) protein; plays a role in protecting the egg from the environment. The chain is Chorion protein S15 (Cp15) from Drosophila subobscura (Fruit fly).